The sequence spans 118 residues: UPF0342 protein Hore_03100 (118 aa).

The protein belongs to the UPF0342 family.

This is UPF0342 protein Hore_03100 from Halothermothrix orenii (strain H 168 / OCM 544 / DSM 9562).